Consider the following 1067-residue polypeptide: UPF0507 protein KLLA0D01133g (1067 aa).

Positions Ile280 to Thr432 constitute a VPS9 domain.

Belongs to the UPF0507 family.

The protein is UPF0507 protein KLLA0D01133g of Kluyveromyces lactis (strain ATCC 8585 / CBS 2359 / DSM 70799 / NBRC 1267 / NRRL Y-1140 / WM37) (Yeast).